The following is a 169-amino-acid chain: Allophycocyanin subunit beta-18 (169 aa).

The residue at position 72 (asparagine 72) is an N4-methylasparagine. Cysteine 82 contacts (2R,3E)-phycocyanobilin.

Belongs to the phycobiliprotein family. Heterodimer of an alpha and a beta chain. In terms of processing, contains one covalently linked bilin chromophore.

It localises to the plastid. The protein localises to the chloroplast thylakoid membrane. Its function is as follows. Light-harvesting photosynthetic bile pigment-protein from the phycobiliprotein complex. Allophycocyanin has a maximum absorption at approximately 650 nanometers. This Porphyra purpurea (Red seaweed) protein is Allophycocyanin subunit beta-18 (apcF).